A 356-amino-acid polypeptide reads, in one-letter code: Mitogen-activated protein kinase PMK1 (356 aa).

The Protein kinase domain maps to 24-312 (YDIQDVVGEG…VEEALKHPYL (289 aa)). Residues 30-38 (VGEGAYGVV) and Lys53 contribute to the ATP site.

This sequence belongs to the protein kinase superfamily. CMGC Ser/Thr protein kinase family. MAP kinase subfamily. The cofactor is Mg(2+). Phosphorylated by MST7.

It catalyses the reaction L-seryl-[protein] + ATP = O-phospho-L-seryl-[protein] + ADP + H(+). The catalysed reaction is L-threonyl-[protein] + ATP = O-phospho-L-threonyl-[protein] + ADP + H(+). Functionally, mitogen-activated protein kinase; part of the MST11-MST7-PMK1 MAP kinase (MAPK) cascade that is essential for appressorium formation, penetration and invasive growth. Central regulator of appressorium development that acts downstream of the cAMP signal. The MST11-MST7-PMK1 MAP kinase cascade transduces signals from the cell surface sensors MDB2 and SHO1 that recognize various surface signals such as surface hydrophobicity, cutin monomers, and rice leaf waxes. Regulates expression of secreted fungal effector proteins implicated of host immune defenses, preventing reactive oxygen species generation and excessive callose deposition at plasmodesmata. Furthermore, controls the hyphal constriction required for fungal growth from one rice cell to the neighboring cell, enabling host tissue colonization and blast disease. Targets downstream of the PMK1-MAPK pathway include transcription factor MST12 and pathogenicity-related genes GAS1 and GAS2, both of which are expressed during appressorium formation, even if regulation of MST12 is not associated with expression of GAS1 or GAS2. This Pyricularia oryzae (Rice blast fungus) protein is Mitogen-activated protein kinase PMK1.